An 859-amino-acid polypeptide reads, in one-letter code: Mycobactin import ATP-binding/permease protein IrtA (859 aa).

At 1 to 292 (MARGLQGVML…SRLLAPLKLP (292 aa)) the chain is on the cytoplasmic side. The FAD-binding FR-type domain maps to 15-122 (ARDHTATVIE…MSLMGSSRFD (108 aa)). FAD is bound by residues 70 to 73 (RAYT), 87 to 91 (DVVLH), and 97 to 98 (AS). Positions 247 to 267 (HRATEPAATEPEVGAAPQPES) are disordered. Residues 293 to 313 (LVLSGVLAALVTLAQLAPFVL) traverse the membrane as a helical segment. Positions 293–575 (LVLSGVLAAL…IAYGLGGLRT (283 aa)) constitute an ABC transmembrane type-1 domain. The Periplasmic portion of the chain corresponds to 314 to 334 (LVELSRLLVSGAGAHRLFTVG). Residues 335 to 355 (FAAVGLLGTGALLAAALTLWL) traverse the membrane as a helical segment. Residues 356–408 (HVIDARFARALRLRLLSKLSRLPLGWFTSRGSGSIKKLVTDDTLALHYLVTHA) are Cytoplasmic-facing. Residues 409–429 (VPDAVAAVVAPVGVLVYLFVV) traverse the membrane as a helical segment. At 430 to 432 (DWR) the chain is on the periplasmic side. Residues 433–453 (VALVLFGPVLVYLTITSSLTI) form a helical membrane-spanning segment. Residues 454 to 519 (QSGPRIVQAQ…PLAGKKTLMD (66 aa)) are Cytoplasmic-facing. A helical membrane pass occupies residues 520-540 (LATRPATFLWLIAATGTLLVA). At 541–548 (THRMDPVN) the chain is on the periplasmic side. A helical transmembrane segment spans residues 549–569 (LLPFMFLGTTFGARLLGIAYG). Residues 570 to 859 (LGGLRTGLLA…AVAAAQDGTR (290 aa)) lie on the Cytoplasmic side of the membrane. Residues 610–843 (VVFDHVTFGY…GGRYCRLWDT (234 aa)) form the ABC transporter domain. 643–650 (GPSGSGKS) is an ATP binding site.

Belongs to the ABC transporter superfamily. Siderophore-Fe(3+) uptake transporter (SIUT) (TC 3.A.1.21) family. Forms a heterodimer with IrtB. Requires FAD as cofactor.

The protein resides in the cell inner membrane. In terms of biological role, part of the ABC transporter complex IrtAB involved in the import of iron-bound mycobactin (Fe-MBT) and carboxymycobactin (Fe-cMBT). Mycobactins are then reduced by the siderophore interaction domain to facilitate iron release in the bacterial cell. Transmembrane domains (TMD) form a pore in the membrane and the ATP-binding domain (NBD) is responsible for energy generation. Required for replication in human macrophages and in mouse lungs. This Mycobacterium tuberculosis (strain ATCC 25618 / H37Rv) protein is Mycobactin import ATP-binding/permease protein IrtA (irtA).